The sequence spans 384 residues: Probable protein phosphatase 2C 42 (384 aa).

The 301-residue stretch at 58 to 358 (DFSMAVIQAN…DDITVIVVFL (301 aa)) folds into the PPM-type phosphatase domain. 4 residues coordinate Mn(2+): Asp89, Gly90, Asp290, and Asp349.

Belongs to the PP2C family. It depends on Mg(2+) as a cofactor. Mn(2+) is required as a cofactor.

It carries out the reaction O-phospho-L-seryl-[protein] + H2O = L-seryl-[protein] + phosphate. The enzyme catalyses O-phospho-L-threonyl-[protein] + H2O = L-threonyl-[protein] + phosphate. In terms of biological role, dephosphorylates and represses plasma membrane H(+)-ATPases (PM H(+)-ATPases, e.g. AHA1 and AHA2), thus influencing negatively plant growth and fitness. Promotes the apical hook maintenance of etiolated seedlings. This Arabidopsis thaliana (Mouse-ear cress) protein is Probable protein phosphatase 2C 42.